The following is a 983-amino-acid chain: Glycine dehydrogenase (decarboxylating) (983 aa).

At K731 the chain carries N6-(pyridoxal phosphate)lysine.

The protein belongs to the GcvP family. In terms of assembly, the glycine cleavage system is composed of four proteins: P, T, L and H. Pyridoxal 5'-phosphate serves as cofactor.

It carries out the reaction N(6)-[(R)-lipoyl]-L-lysyl-[glycine-cleavage complex H protein] + glycine + H(+) = N(6)-[(R)-S(8)-aminomethyldihydrolipoyl]-L-lysyl-[glycine-cleavage complex H protein] + CO2. Its function is as follows. The glycine cleavage system catalyzes the degradation of glycine. The P protein binds the alpha-amino group of glycine through its pyridoxal phosphate cofactor; CO(2) is released and the remaining methylamine moiety is then transferred to the lipoamide cofactor of the H protein. The protein is Glycine dehydrogenase (decarboxylating) of Nostoc sp. (strain PCC 7120 / SAG 25.82 / UTEX 2576).